Here is a 257-residue protein sequence, read N- to C-terminus: Discoidin-2 (257 aa).

The interval 1–155 (MSVPAGSVSC…SLRWELYALP (155 aa)) is beta-sandwich. The region spanning 10–154 (CLANALLNLR…ISLRWELYAL (145 aa)) is the F5/8 type C domain. Residues Asn-39, Ser-40, and Asp-47 each coordinate Ca(2+). The Cell attachment site signature appears at 81 to 83 (RGD). His-84 carries the post-translational modification Phosphohistidine. The interval 156–162 (VKSYSNP) is linker. The segment at 163–257 (SVQVGEVSIG…FDYVAVEFNN (95 aa)) is lectin-like. A carbohydrate-binding residues include Asp-209, Arg-218, and Trp-238.

Homotrimer. The N-terminus is blocked. In terms of tissue distribution, maturing spore cells.

Galactose-binding lectin. May be necessary for the primary process of spore formation and may be involved in spore coat formation. The protein is Discoidin-2 (dscE) of Dictyostelium discoideum (Social amoeba).